A 138-amino-acid polypeptide reads, in one-letter code: ATP synthase epsilon chain (138 aa).

Belongs to the ATPase epsilon chain family. In terms of assembly, F-type ATPases have 2 components, CF(1) - the catalytic core - and CF(0) - the membrane proton channel. CF(1) has five subunits: alpha(3), beta(3), gamma(1), delta(1), epsilon(1). CF(0) has three main subunits: a, b and c.

The protein resides in the cell inner membrane. Functionally, produces ATP from ADP in the presence of a proton gradient across the membrane. This Psychrobacter sp. (strain PRwf-1) protein is ATP synthase epsilon chain.